The sequence spans 462 residues: N-myc proto-oncogene protein (462 aa).

The segment at Leu-19–Glu-47 is interaction with AURKA. An interaction with AURKA and FBXW7 region spans residues Leu-61 to Gly-90. Residues Asn-76–Glu-85 carry the 9aaTAD motif. Disordered regions lie at residues Glu-133–Pro-177, Ala-232–Lys-290, and Ala-332–Gln-390. Low complexity predominate over residues Gly-138 to Ala-174. The span at Thr-257–Asp-276 shows a compositional bias: acidic residues. Phosphoserine; by CK2 occurs at positions 259 and 261. Residues Glu-379–Leu-431 enclose the bHLH domain. Residues Leu-431–Leu-452 form a leucine-zipper region.

Efficient DNA binding requires dimerization with another bHLH protein. Binds DNA as a heterodimer with MAX. Interacts with KDM5A, KDM5B and HUWE1. Interacts with MYCNOS. Interacts with AURKA; interaction is phospho-independent and triggers AURKA activation; AURKA competes with FBXW7 for binding to unphosphorylated MYCN but not for binding to unphosphorylated MYCN. Interacts with FBXW7; FBXW7 competes with AURKA for binding to unphosphorylated MYCN but not for binding to phosphorylated MYCN. In terms of processing, phosphorylated by GSK3-beta which may promote its degradation. Phosphorylated by AURKA.

Its subcellular location is the nucleus. Functionally, positively regulates the transcription of MYCNOS in neuroblastoma cells. In Rattus norvegicus (Rat), this protein is N-myc proto-oncogene protein (Mycn).